Here is a 578-residue protein sequence, read N- to C-terminus: Probable acyl-activating enzyme 12, peroxisomal (578 aa).

The short motif at 576-578 (SRL) is the Microbody targeting signal element.

Belongs to the ATP-dependent AMP-binding enzyme family. Expressed at low levels in leaves.

Its subcellular location is the peroxisome. Functionally, may act as an acid--thiol ligase that activates carboxylic acids by forming acyl-CoAs. The sequence is that of Probable acyl-activating enzyme 12, peroxisomal (AAE12) from Arabidopsis thaliana (Mouse-ear cress).